The following is a 157-amino-acid chain: Endoribonuclease YbeY (157 aa).

His-111, His-115, and His-121 together coordinate Zn(2+).

The protein belongs to the endoribonuclease YbeY family. Zn(2+) is required as a cofactor.

The protein resides in the cytoplasm. In terms of biological role, single strand-specific metallo-endoribonuclease involved in late-stage 70S ribosome quality control and in maturation of the 3' terminus of the 16S rRNA. This chain is Endoribonuclease YbeY, found in Pseudomonas putida (strain ATCC 47054 / DSM 6125 / CFBP 8728 / NCIMB 11950 / KT2440).